The chain runs to 117 residues: Fluoride-specific ion channel FluC 2 (117 aa).

2 consecutive transmembrane segments (helical) span residues 1 to 21 (MISI…RSAI) and 46 to 66 (FLIG…AFFV). Na(+)-binding residues include glycine 71 and threonine 74. The chain crosses the membrane as a helical span at residues 95-115 (LFLNYSLLQFIIGFIACYIGY).

Belongs to the fluoride channel Fluc/FEX (TC 1.A.43) family.

It is found in the cell membrane. The catalysed reaction is fluoride(in) = fluoride(out). Na(+) is not transported, but it plays an essential structural role and its presence is essential for fluoride channel function. Functionally, fluoride-specific ion channel. Important for reducing fluoride concentration in the cell, thus reducing its toxicity. This chain is Fluoride-specific ion channel FluC 2, found in Staphylococcus aureus (strain Mu50 / ATCC 700699).